Here is a 298-residue protein sequence, read N- to C-terminus: Aquaporin NIP2-1 (298 aa).

3 N-linked (GlcNAc...) asparagine glycosylation sites follow: Asn4, Asn13, and Asn26. 2 helical membrane passes run 51–71 (VVSE…AAGI) and 85–105 (SIAG…ISGA). The NPA 1 motif lies at 108–110 (NPA). Transmembrane regions (helical) follow at residues 124–144 (IQVP…SFVL), 166–186 (SLVV…AVAT), and 194–214 (LAGL…GAIS). An NPA 2 motif is present at residues 219–221 (NPA). The helical transmembrane segment at 237–257 (WIYFLGPVMGTLSGAWTYTFI) threads the bilayer.

The protein belongs to the MIP/aquaporin (TC 1.A.8) family. NIP (TC 1.A.8.12) subfamily. Mainly expressed in the roots. In roots, it localizes in the main and lateral roots, but not in root hairs. Within a root, it localizes on the plasma membrane of the distal side of both exodermis and endodermis, where casparian strips exist (at protein level). Expressed low levels in leaves and anthers.

The protein localises to the cell membrane. Its function is as follows. Silicon influx transporter responsible for silicon transport from the external solution to the root cells. Is coupled with the silicon efflux transporter LSI2 in both exodermal and endodermal root cells for an efficient silicon transport across the cells into the stele. Silicon is beneficial to plant growth and helps plants to overcome abiotic and biotic stresses by preventing lodging (falling over) and increasing resistance to pests and diseases, as well as other stresses. Is coupled with LSI2 transporter in roots for efficient uptake of arsenite, which is further dispatched in shoots and grains. Mediates uptake of methylated arsenic species in roots. This is Aquaporin NIP2-1 from Oryza sativa subsp. japonica (Rice).